The sequence spans 4116 residues: Dynein axonemal heavy chain 3 (4116 aa).

Disordered regions lie at residues 1–68 (MGAT…ANEE) and 137–172 (VPRD…KEDS). The segment at 1 to 1390 (MGATGRLELT…QVQIITTEAL (1390 aa)) is stem. Over residues 145 to 156 (GLPSSGNRSSSE) the composition is skewed to polar residues. Residues 785–852 (DLIKRCSEFE…NKEEELLEKE (68 aa)) adopt a coiled-coil conformation. AAA regions lie at residues 1391 to 1612 (YGYE…VLTA), 1672 to 1903 (KVLN…LHCK), 2036 to 2284 (KVPA…VIQG), and 2395 to 2646 (EFNN…LRRH). ATP-binding positions include 1429–1436 (GPAGTGKT), 1710–1717 (GDPMGGKT), 2074–2081 (GPTGTGKS), and 2434–2441 (GIGGSGRQ). The segment at 2661-2960 (FKTLLNSKRQ…KDLEENIEIC (300 aa)) is stalk. AAA regions lie at residues 3045–3275 (LGDP…EISE) and 3488–3712 (VREF…QIQM).

Belongs to the dynein heavy chain family. In terms of assembly, consists of at least two heavy chains and a number of intermediate and light chains. In terms of tissue distribution, expressed primarily in trachea and testis, 2 tissues containing axonemal structures. Also expressed in lung.

It is found in the cytoplasm. It localises to the cytoskeleton. Its subcellular location is the cilium axoneme. Its function is as follows. Force generating protein of respiratory cilia. Produces force towards the minus ends of microtubules. Dynein has ATPase activity; the force-producing power stroke is thought to occur on release of ADP. Involved in sperm motility; implicated in sperm flagellar assembly. This is Dynein axonemal heavy chain 3 (DNAH3) from Homo sapiens (Human).